A 257-amino-acid polypeptide reads, in one-letter code: MSDLKKAAQKAIELMDLTTLNDDDTDQKVIELCHKAKTPAGNTAAICIYPRFIPIARKTLNEMGCESIRIATVTNFPHGNDDIAIAVLETRAAVAYGADEVDVVFPYRALMAGNETVGFELVKACKEACGEGVLLKVIIESGVLQDPALIRKASELCIDAGADFIKTSTGKVPVNATIEAAEIMMTVISEKNTKVGFKPAGGVRDAAAAGEFLGLAARLLGDEWATPRTFRFGASSLLINLLHTLELGEAAKGPQGY.

Residue Asp102 is the Proton donor/acceptor of the active site. The Schiff-base intermediate with acetaldehyde role is filled by Lys166. Lys198 (proton donor/acceptor) is an active-site residue.

It belongs to the DeoC/FbaB aldolase family. DeoC type 2 subfamily.

The protein resides in the cytoplasm. It catalyses the reaction 2-deoxy-D-ribose 5-phosphate = D-glyceraldehyde 3-phosphate + acetaldehyde. The protein operates within carbohydrate degradation; 2-deoxy-D-ribose 1-phosphate degradation; D-glyceraldehyde 3-phosphate and acetaldehyde from 2-deoxy-alpha-D-ribose 1-phosphate: step 2/2. Catalyzes a reversible aldol reaction between acetaldehyde and D-glyceraldehyde 3-phosphate to generate 2-deoxy-D-ribose 5-phosphate. The polypeptide is Deoxyribose-phosphate aldolase (Shewanella sediminis (strain HAW-EB3)).